The sequence spans 239 residues: Probable transcriptional regulatory protein BC_0539 (239 aa).

This sequence belongs to the TACO1 family. YeeN subfamily.

It is found in the cytoplasm. This is Probable transcriptional regulatory protein BC_0539 from Bacillus cereus (strain ATCC 14579 / DSM 31 / CCUG 7414 / JCM 2152 / NBRC 15305 / NCIMB 9373 / NCTC 2599 / NRRL B-3711).